A 265-amino-acid polypeptide reads, in one-letter code: MGAAVFFGCTFVAFGPAFALFLITVAGDPLRVIILVAGAFFWLVSLLLASVVWFILVHVTDRSDARLQYGLLIFGAAVSVLLQEVFRFAYYKLLKKADEGLASLSEDGRSPISIRQMAYVSGLSFGIISGVFSVINILADALGPGVVGIHGDSPYYFLTSAFLTAAIILLHTFWGVVFFDACERRRYWALGLVVGSHLLTSGLTFLNPWYEASLLPIYAVTVSMGLWAFITAGGSLRSIQRSLLCRRQEDSRVMVYSALRIPPED.

Topologically, residues 1-2 (MG) are lumenal. A helical membrane pass occupies residues 3–23 (AAVFFGCTFVAFGPAFALFLI). Residues 24–31 (TVAGDPLR) are Cytoplasmic-facing. Residues 32–52 (VIILVAGAFFWLVSLLLASVV) traverse the membrane as a helical segment. Topologically, residues 53 to 68 (WFILVHVTDRSDARLQ) are lumenal. The chain crosses the membrane as a helical span at residues 69-89 (YGLLIFGAAVSVLLQEVFRFA). Residues 90 to 118 (YYKLLKKADEGLASLSEDGRSPISIRQMA) lie on the Cytoplasmic side of the membrane. The helical transmembrane segment at 119–139 (YVSGLSFGIISGVFSVINILA) threads the bilayer. The Lumenal portion of the chain corresponds to 140 to 158 (DALGPGVVGIHGDSPYYFL). The helical transmembrane segment at 159 to 179 (TSAFLTAAIILLHTFWGVVFF) threads the bilayer. The Cytoplasmic portion of the chain corresponds to 180 to 186 (DACERRR). The helical transmembrane segment at 187 to 207 (YWALGLVVGSHLLTSGLTFLN) threads the bilayer. The Lumenal portion of the chain corresponds to 208–213 (PWYEAS). Residues 214–234 (LLPIYAVTVSMGLWAFITAGG) traverse the membrane as a helical segment. The Cytoplasmic portion of the chain corresponds to 235-265 (SLRSIQRSLLCRRQEDSRVMVYSALRIPPED).

It belongs to the APH-1 family. In terms of assembly, the functional gamma-secretase complex is composed of at least four polypeptides: a presenilin homodimer (PSEN1 or PSEN2), nicastrin (NCSTN), APH1 (APH1A or APH1B) and PSENEN/PEN2. As to expression, widely expressed. Expressed in leukocytes, lung, placenta, small intestine, liver, kidney, spleen thymus, skeletal muscle, heart and brain. Isoform 1 and isoform 2 are nearly expressed at the same level.

The protein resides in the endoplasmic reticulum membrane. The protein localises to the golgi apparatus. Its subcellular location is the golgi stack membrane. Its function is as follows. Non-catalytic subunit of the gamma-secretase complex, an endoprotease complex that catalyzes the intramembrane cleavage of integral membrane proteins such as Notch receptors and APP (amyloid-beta precursor protein). Required for normal gamma-secretase assembly. The gamma-secretase complex plays a role in Notch and Wnt signaling cascades and regulation of downstream processes via its role in processing key regulatory proteins, and by regulating cytosolic CTNNB1 levels. The sequence is that of Gamma-secretase subunit APH-1A (APH1A) from Homo sapiens (Human).